The primary structure comprises 801 residues: Palmitoyl thioesterase CPT1C (801 aa).

Over 1–49 the chain is Cytoplasmic; it reads MAEAHQASSLLSSLSSDGAEVELSSSVWQEIYLSALRSWKRNLWRVWND. The chain crosses the membrane as a helical span at residues 50–70; the sequence is FLAGVVPATPLSWLFLFSTIQ. Topologically, residues 71–103 are mitochondrial intermembrane; the sequence is LACLLQLDPSLGLMEKIKELLPDWGGQHHQLQG. Residues 104–124 traverse the membrane as a helical segment; sequence LLAAAVFASCLWGTLIFTLHV. Topologically, residues 125 to 801 are cytoplasmic; the sequence is ALRLLLSHHG…PNIPKSSTNL (677 aa). The active-site Proton acceptor is the His-469. 551 to 563 contributes to the CoA binding site; sequence GKSFIKGCHVSSD. 3 residues coordinate (R)-carnitine: Tyr-585, Ser-587, and Thr-598. The segment at 760-801 is required for interaction with GRIA1; the sequence is LFQAGQQFKRQFTGLGESSGWKYSNLSCKTVDPNIPKSSTNL.

Belongs to the carnitine/choline acetyltransferase family. Peripherally associated with AMPAR complex. AMPAR complex consists of an inner core made of 4 pore-forming GluA/GRIA proteins (GRIA1, GRIA2, GRIA3 and GRIA4) and 4 major auxiliary subunits arranged in a twofold symmetry. One of the two pairs of distinct binding sites is occupied either by CNIH2, CNIH3 or CACNG2, CACNG3. The other harbors CACNG2, CACNG3, CACNG4, CACNG8 or GSG1L. This inner core of AMPAR complex is complemented by outer core constituents binding directly to the GluA/GRIA proteins at sites distinct from the interaction sites of the inner core constituents. Outer core constituents include at least PRRT1, PRRT2, CKAMP44/SHISA9, FRRS1L and NRN1. The proteins of the inner and outer core serve as a platform for other, more peripherally associated AMPAR constituents, including CPT1C. Alone or in combination, these auxiliary subunits control the gating and pharmacology of the AMPAR complex and profoundly impact their biogenesis and protein processing. Interacts with SACM1L; the interaction regulates SACM1L phosphatidylinositol-3-phosphatase activity and translocation to endoplasmic reticulum/trans Golgi network in a malonyl-CoA dependent manner. Interacts with ATL1. Expressed in brain (at protein level).

The protein resides in the synapse. The protein localises to the cell projection. It is found in the dendrite. It localises to the axon. Its subcellular location is the endoplasmic reticulum membrane. The catalysed reaction is S-hexadecanoyl-L-cysteinyl-[protein] + H2O = L-cysteinyl-[protein] + hexadecanoate + H(+). Its function is as follows. Palmitoyl thioesterase specifically expressed in the endoplasmic reticulum of neurons. Modulates the trafficking of the glutamate receptor, AMPAR, to plasma membrane through depalmitoylation of GRIA1. Also regulates AMPR trafficking through the regulation of SACM1L phosphatidylinositol-3-phosphatase activity by interaction in a malonyl-CoA dependent manner. Binds malonyl-CoA and couples malonyl-CoA to ceramide levels, necessary for proper spine maturation and contributing to systemic energy homeostasis and appetite control. Binds to palmitoyl-CoA, but does not have carnitine palmitoyltransferase 1 catalytic activity or at very low levels. This is Palmitoyl thioesterase CPT1C (Cpt1c) from Rattus norvegicus (Rat).